A 446-amino-acid polypeptide reads, in one-letter code: Adenylosuccinate synthetase 1 (446 aa).

Residues Gly-20–Lys-26 and Gly-48–Thr-50 each bind GTP. The active-site Proton acceptor is Asp-21. Residues Asp-21 and Gly-48 each contribute to the Mg(2+) site. IMP contacts are provided by residues Asp-21–Lys-24, Asn-46–His-49, Thr-137, Arg-151, Gln-232, Thr-247, and Arg-319. His-49 (proton donor) is an active-site residue. Residue Ser-315–Arg-321 participates in substrate binding. Residues Arg-321, Lys-347–Asp-349, and Ser-429–Gly-431 each bind GTP.

It belongs to the adenylosuccinate synthetase family. In terms of assembly, homodimer. It depends on Mg(2+) as a cofactor.

The protein resides in the cytoplasm. The enzyme catalyses IMP + L-aspartate + GTP = N(6)-(1,2-dicarboxyethyl)-AMP + GDP + phosphate + 2 H(+). Its pathway is purine metabolism; AMP biosynthesis via de novo pathway; AMP from IMP: step 1/2. Plays an important role in the de novo pathway of purine nucleotide biosynthesis. Catalyzes the first committed step in the biosynthesis of AMP from IMP. This chain is Adenylosuccinate synthetase 1, found in Cupriavidus pinatubonensis (strain JMP 134 / LMG 1197) (Cupriavidus necator (strain JMP 134)).